A 551-amino-acid polypeptide reads, in one-letter code: MLKLRDWQEKLKDKVIEGLRNNFLVALNAPTGSGKTLFSLLVSLEVKPKVLFVVRTHNEFYPIYRDLTKIREKRNITFSFLVGKPSSCLYAEKGAESEDIPCKYCELKGSIVEVKTDDSPLSLVKKLKKDGLQDKFCPYYSLLNSLYKADVIALTYPYFFIDRYREFIDIDLREYMIVIDEAHNLDKVNELEERSLSEITIQMAIKQSKSEESRRILSKLLNQLREVVLPDEKYIKVENVPKLSKEELEILADDYEDIRKDSLKQGKVNKIHIGSILRFFSLLSIGSFIPFSYSKRLVIKNPEISYYLNLLNDNELSIILMSGTLPPREYMEKVWGIKRNMLYLDVEREIQKRVSGSYECYIGVDVTSKYDMRSDNMWKRYADYLLKIYFQAKANVLVVFPSYEIMDRVMSRISLPKYVESEDSSVEDLYSAISANNKVLIGSVGKGKLAEGIELRNNDRSLISDVVIVGIPYPPPDDYLKILAQRVSLKMNRENEEFLFKIPALVTIKQAIGRAIRDVNDKCNVWLLDKRFESLYWKKNLKCLNANKMKL.

A Helicase ATP-binding domain is found at 1-228 (MLKLRDWQEK…KLLNQLREVV (228 aa)). 29 to 36 (APTGSGKT) contributes to the ATP binding site. [4Fe-4S] cluster-binding residues include Cys88, Cys102, Cys105, and Cys137. Residues 180-183 (DEAH) carry the DEAH box motif.

It belongs to the helicase family. RAD3/XPD subfamily. Monomer. The cofactor is [4Fe-4S] cluster.

The catalysed reaction is Couples ATP hydrolysis with the unwinding of duplex DNA at the replication fork by translocating in the 5'-3' direction. This creates two antiparallel DNA single strands (ssDNA). The leading ssDNA polymer is the template for DNA polymerase III holoenzyme which synthesizes a continuous strand.. It carries out the reaction ATP + H2O = ADP + phosphate + H(+). Its function is as follows. ATP-dependent 5'-3' DNA helicase. Thought to be involved in nucleotide excision repair (NER) of DNA. The sequence is that of ATP-dependent DNA helicase XPD from Sulfolobus acidocaldarius (strain ATCC 33909 / DSM 639 / JCM 8929 / NBRC 15157 / NCIMB 11770).